The chain runs to 61 residues: Small ribosomal subunit protein uS14 (61 aa).

4 residues coordinate Zn(2+): C24, C27, C40, and C43.

Belongs to the universal ribosomal protein uS14 family. Zinc-binding uS14 subfamily. Part of the 30S ribosomal subunit. Contacts proteins S3 and S10. Zn(2+) serves as cofactor.

Its function is as follows. Binds 16S rRNA, required for the assembly of 30S particles and may also be responsible for determining the conformation of the 16S rRNA at the A site. This chain is Small ribosomal subunit protein uS14, found in Halalkalibacterium halodurans (strain ATCC BAA-125 / DSM 18197 / FERM 7344 / JCM 9153 / C-125) (Bacillus halodurans).